A 232-amino-acid chain; its full sequence is Ubiquinone biosynthesis O-methyltransferase (232 aa).

S-adenosyl-L-methionine-binding residues include R36, G55, D76, and L120.

Belongs to the methyltransferase superfamily. UbiG/COQ3 family.

The catalysed reaction is a 3-demethylubiquinol + S-adenosyl-L-methionine = a ubiquinol + S-adenosyl-L-homocysteine + H(+). It catalyses the reaction a 3-(all-trans-polyprenyl)benzene-1,2-diol + S-adenosyl-L-methionine = a 2-methoxy-6-(all-trans-polyprenyl)phenol + S-adenosyl-L-homocysteine + H(+). It participates in cofactor biosynthesis; ubiquinone biosynthesis. O-methyltransferase that catalyzes the 2 O-methylation steps in the ubiquinone biosynthetic pathway. The polypeptide is Ubiquinone biosynthesis O-methyltransferase (Pseudomonas fluorescens (strain ATCC BAA-477 / NRRL B-23932 / Pf-5)).